The sequence spans 89 residues: Small ribosomal subunit protein uS14 (89 aa).

The protein belongs to the universal ribosomal protein uS14 family. As to quaternary structure, part of the 30S ribosomal subunit. Contacts proteins S3 and S10.

Its function is as follows. Binds 16S rRNA, required for the assembly of 30S particles and may also be responsible for determining the conformation of the 16S rRNA at the A site. The polypeptide is Small ribosomal subunit protein uS14 (Lacticaseibacillus casei (strain BL23) (Lactobacillus casei)).